We begin with the raw amino-acid sequence, 109 residues long: uncharacterized protein (109 aa).

2 helical membrane-spanning segments follow: residues 19–39 and 53–73; these read LELVENYVICFFTVLCFCLIP and YFIDFFFFHLSPSIPFWFYPF.

It localises to the membrane. This is an uncharacterized protein from Saccharomyces cerevisiae (strain ATCC 204508 / S288c) (Baker's yeast).